A 184-amino-acid polypeptide reads, in one-letter code: GTP-binding protein Rheb (184 aa).

Lysine 8 is covalently cross-linked (Glycyl lysine isopeptide (Lys-Gly) (interchain with G-Cter in ubiquitin)). Residues serine 16, valine 17, glycine 18, lysine 19, serine 20, serine 21, valine 32, and aspartate 33 each coordinate GDP. Serine 16 provides a ligand contact to GTP. The GTP site is built by glycine 18, lysine 19, serine 20, serine 21, and valine 32. Residue serine 20 coordinates Mg(2+). GTP-binding residues include tyrosine 35, threonine 38, asparagine 119, and aspartate 122. The Effector region signature appears at 35–43; sequence YDPTIENTF. Threonine 38 provides a ligand contact to Mg(2+). Residues asparagine 119 and aspartate 122 each contribute to the GDP site. A Phosphoserine; by MAPKAPK5 modification is found at serine 130. Residue alanine 150 coordinates GDP. Alanine 150 is a GTP binding site. Cysteine methyl ester is present on cysteine 181. Cysteine 181 carries S-farnesyl cysteine lipidation. A propeptide spans 182 to 184 (removed in mature form); it reads SVM.

This sequence belongs to the small GTPase superfamily. Rheb family. As to quaternary structure, associates with the mTORC1 complex (MTOR, MLST8 and RPTOR) in a guanyl nucleotide-independent manner. Interacts with TSC2. Interacts with MCRS1; the interaction maintains RHEB at the lysosome in its active GTP-bound form and prevents its interaction with the mTORC1 complex inhibitor TSC2, ensuring activation of the mTORC1 complex by RHEB. Interacts (when prenylated) with PDE6D; this promotes release from membranes. Post-translationally, farnesylation is important for efficiently activating mTORC1-mediated signaling. In terms of processing, polyubiquitinated in response to amino acid, promoting its interaction with MTOR and mTORC1 activation. Deubiquitination by ATXN3 promotes recruitment of the TSC-TBC complex and RHEB inactivation by TSC2. Monoubiquitinated at Lys-8 by RNF152, promoting its association with the TSC-TBC complex. Deubiquitinated at Lys-8 by USP4, promoting mTORC1 activation. Phosphorylation by MAPKAPK5 impairs GTP-binding and inactivation. In terms of tissue distribution, ubiquitous. Highest levels observed in skeletal and cardiac muscle.

It is found in the endomembrane system. Its subcellular location is the lysosome membrane. The protein localises to the golgi apparatus membrane. It localises to the endoplasmic reticulum membrane. The protein resides in the cytoplasm. It is found in the cytosol. The catalysed reaction is GTP + H2O = GDP + phosphate + H(+). Its activity is regulated as follows. Alternates between an inactive form bound to GDP and an active form bound to GTP. Inactivated by the TSC-TBC complex via the GTPase activating protein (GAP) domain of TSC2. Autoinhibited by Tyr-35, which constrains the active site conformation, restricting the access of the catalytic Asp-65 to the nucleotide-binding pocket. Specifically inhibited by NR1 (4-bromo-6-(3,4-dichlorophenylthio)-1-(4-(dimethylcarbamoyl)benzyl)-1H-indole-2-carboxylic acid). Functionally, small GTPase that acts as an allosteric activator of the canonical mTORC1 complex, an evolutionarily conserved central nutrient sensor that stimulates anabolic reactions and macromolecule biosynthesis to promote cellular biomass generation and growth. In response to nutrients, growth factors or amino acids, specifically activates the protein kinase activity of MTOR, the catalytic component of the mTORC1 complex: acts by causing a conformational change that allows the alignment of residues in the active site of MTOR, thereby enhancing the phosphorylation of ribosomal protein S6 kinase (RPS6KB1 and RPS6KB2) and EIF4EBP1 (4E-BP1). RHEB is also required for localization of the TSC-TBC complex to lysosomal membranes. In response to starvation, RHEB is inactivated by the TSC-TBC complex, preventing activation of mTORC1. Has low intrinsic GTPase activity. This is GTP-binding protein Rheb from Homo sapiens (Human).